A 182-amino-acid chain; its full sequence is Avenin-E (182 aa).

The stretch at 21-26 is one 1; approximate repeat; sequence PFVQQQ. The segment at 21-41 is 3 X 7 AA tandem repeats of P-F-V-Q-Q-Q-Q; sequence PFVQQQPFVQQQQQPFVQQQQ. One copy of the 2; approximate repeat lies at 27 to 34; sequence PFVQQQQQ. Copy 3 of the repeat occupies 35–41; sequence PFVQQQQ.

It belongs to the gliadin/glutenin family. As to quaternary structure, monomer.

Its subcellular location is the vacuole. It is found in the aleurone grain. Functionally, seed storage protein. Serves as a source of nitrogen, carbon, and sulfur for the young developing seedling. The polypeptide is Avenin-E (Avena sativa (Oat)).